Here is a 204-residue protein sequence, read N- to C-terminus: High frequency lysogenization protein HflD homolog (204 aa).

Belongs to the HflD family.

It localises to the cytoplasm. Its subcellular location is the cell inner membrane. This is High frequency lysogenization protein HflD homolog from Xanthomonas euvesicatoria pv. vesicatoria (strain 85-10) (Xanthomonas campestris pv. vesicatoria).